A 322-amino-acid chain; its full sequence is Putative MgpC-like protein MPN_367 (322 aa).

Residues M1–N48 are compositionally biased toward low complexity. Disordered stretches follow at residues M1–S59 and D118–L145. A compositionally biased stretch (polar residues) spans T120–G134.

The protein belongs to the MgpC family.

This Mycoplasma pneumoniae (strain ATCC 29342 / M129 / Subtype 1) (Mycoplasmoides pneumoniae) protein is Putative MgpC-like protein MPN_367.